Reading from the N-terminus, the 432-residue chain is uncharacterized protein (432 aa).

It to M.jannaschii MJ0977.

This is an uncharacterized protein from Methanocaldococcus jannaschii (strain ATCC 43067 / DSM 2661 / JAL-1 / JCM 10045 / NBRC 100440) (Methanococcus jannaschii).